The sequence spans 190 residues: dCTP deaminase (190 aa).

113-118 is a dCTP binding site; the sequence is KSTYAR. Glu139 functions as the Proton donor/acceptor in the catalytic mechanism. Residues Gln158, Tyr172, Lys181, and Gln182 each contribute to the dCTP site.

It belongs to the dCTP deaminase family. Homotrimer.

The catalysed reaction is dCTP + H2O + H(+) = dUTP + NH4(+). It functions in the pathway pyrimidine metabolism; dUMP biosynthesis; dUMP from dCTP (dUTP route): step 1/2. In terms of biological role, catalyzes the deamination of dCTP to dUTP. In Chlamydia felis (strain Fe/C-56) (Chlamydophila felis), this protein is dCTP deaminase.